We begin with the raw amino-acid sequence, 596 residues long: Cytochrome P450 monooxygenase FUM15 (596 aa).

A disordered region spans residues 476–512 (DRWLSPKNGNREATEQSKFKIGNQKRDSTAAPEVTQE). Residues 484-503 (GNREATEQSKFKIGNQKRDS) are compositionally biased toward basic and acidic residues. C536 is a binding site for heme.

The protein belongs to the cytochrome P450 family. Heme is required as a cofactor.

Its subcellular location is the endoplasmic reticulum. It functions in the pathway secondary metabolite biosynthesis. Functionally, cytochrome P450 monooxygenase; part of the gene cluster that mediates the biosynthesis of fumonisins B1 (FB1), B2 (FB2), B3 (FB3), and B4 (FB4), which are carcinogenic mycotoxins. Within the pathway, FUM15 may be responsible for the hydroxylations at positions C-14 and/or C-15. Also plays a role in self-protection from FB1 toxicity, probably through derivatization of FB1, and may contribute to ceramide biosynthesis. The biosynthesis starts with the FUM1-catalyzed carbon chain assembly from one molecule of acetyl-CoA, eight molecules of malonyl-CoA, and two molecules of methionine (in S-adenosyl form). The C18 polyketide chain is released from the enzyme by a nucleophilic attack of a carbanion, which is derived from R-carbon of alanine by decarboxylation, on the carbonyl carbon of polyketide acyl chain. This step is catalyzed by the pyridoxal 5'-phosphate-dependent aminoacyl transferase FUM8. The resultant 3-keto intermediate is then stereospecifically reduced to a 3-hydroxyl product by reductase FUM13. Subsequent oxidations at C-10 by the cytochrome P450 monooxygenase FUM2, C-14 and C-15 by FUM6, FUM12 or FUM15, tricarballylic esterification of the hydroxyl groups on C-14 and C-15 by acyltransferase FUM14, and C-5 hydroxylation by 2-keto-glutarate-dependent dioxygenase FUM3 furnish the biosynthesis of fumonisins. The tricarballylic moieties are most likely derived from the citric acid cycle, and their addition to the carbon backbone may involve FUM7, FUM10, FUM11 and FUM14. The chain is Cytochrome P450 monooxygenase FUM15 from Gibberella moniliformis (strain M3125 / FGSC 7600) (Maize ear and stalk rot fungus).